The following is a 263-amino-acid chain: Putative ankyrin repeat domain-containing protein 20A12 pseudogene (263 aa).

2 coiled-coil regions span residues 65-121 and 171-263; these read KKDL…MLES and NQVF…IQLH.

The chain is Putative ankyrin repeat domain-containing protein 20A12 pseudogene from Homo sapiens (Human).